Here is a 75-residue protein sequence, read N- to C-terminus: UPF0352 protein CKO_00587 (75 aa).

Belongs to the UPF0352 family.

This Citrobacter koseri (strain ATCC BAA-895 / CDC 4225-83 / SGSC4696) protein is UPF0352 protein CKO_00587.